Consider the following 206-residue polypeptide: Large ribosomal subunit protein uL4 (206 aa).

The segment at 43 to 78 is disordered; sequence ARSGNRAQKDREQVKHTTKKPWRQKGTGRARAGMSS. Basic residues predominate over residues 58 to 70; it reads HTTKKPWRQKGTG.

Belongs to the universal ribosomal protein uL4 family. Part of the 50S ribosomal subunit.

Functionally, one of the primary rRNA binding proteins, this protein initially binds near the 5'-end of the 23S rRNA. It is important during the early stages of 50S assembly. It makes multiple contacts with different domains of the 23S rRNA in the assembled 50S subunit and ribosome. In terms of biological role, forms part of the polypeptide exit tunnel. In Polynucleobacter necessarius subsp. necessarius (strain STIR1), this protein is Large ribosomal subunit protein uL4.